Consider the following 245-residue polypeptide: Polyhedrin (245 aa).

This sequence belongs to the polyhedrin family.

Major component of the virus occlusion bodies, which are large proteinaceous structures (polyhedra), that protect the virus from the outside environment for extended periods until they are ingested by insect larvae. This chain is Polyhedrin, found in Lepidoptera (butterflies and moths).